Consider the following 238-residue polypeptide: Probable septum site-determining protein MinC (238 aa).

This sequence belongs to the MinC family. As to quaternary structure, interacts with MinD and FtsZ.

Its function is as follows. Cell division inhibitor that blocks the formation of polar Z ring septums. Rapidly oscillates between the poles of the cell to destabilize FtsZ filaments that have formed before they mature into polar Z rings. Prevents FtsZ polymerization. This Blochmanniella floridana protein is Probable septum site-determining protein MinC.